We begin with the raw amino-acid sequence, 388 residues long: MSWWWAGAIGAAKKRIDEDEAPRNYESVALIVGVTGIVGNSLAEILPLSDTPCGPWKVYGVARRPRPSWNEDHPITYISCDVLDSVDVEAKLSPLTDVTHIFYATWTKRSTEKENCEANGKMLKNVLNAMIPNCPNLKHICLQTGRKHYLGAFEDWKIKRHDPPLTEDLPRLDSQNFYYTQEDILFEEVQKKESLTWSVHRPGTIFGFSPYSMMNLVGTLCVYAAICKHEGAVLRFPGCKGAWDGYSDCSDADLIAEHQIWAAVDPYAKNEAFNVSNGDVFKWKHFWKVLAEQFGVECGEYEEGKEVKLQDLMKDKGPVWDKIVRENGLSTTKLEDVGNWWFSDIVLGNECWLDTMNKSKEHGFLGFRNSKNSFISWIDKVKAFKIVP.

Residues 35–37 (TGI), 63–64 (RR), 81–82 (DV), 105–106 (TW), and glutamine 143 each bind NADP(+). Catalysis depends on residues lysine 147 and tyrosine 178. NADP(+) contacts are provided by residues tyrosine 178, isoleucine 205, and 212–214 (SMM).

The protein belongs to the short-chain dehydrogenases/reductases (SDR) family.

It catalyses the reaction (S)-8-oxocitronellyl enol + NADP(+) = (6E)-8-oxogeranial + NADPH + H(+). The catalysed reaction is (S)-8-oxocitronellyl enol + NAD(+) = (6E)-8-oxogeranial + NADH + H(+). Functionally, iridoid synthase that catalyzes the first step in generation of the iridoid ring scaffold using the linear monoterpene (6E)-8-oxogeranial as substrate. Iridoids comprise a large family of distinctive bicyclic monoterpenes that possess a wide range of pharmacological activities, including anticancer, anti-inflammatory, antifungal and antibacterial activities. Catalyzes the conversion of the linear monoterpene (6E)-8-oxogeranial to (S)-8-oxocitronellyl enol, a precursor of nepetalactones, which are metabolites that are both insect-repellent and have euphoric effect in cats. This chain is (S)-8-oxocitronellyl enol synthase ISY1, found in Nepeta racemosa (Catmint).